The following is a 390-amino-acid chain: Lipid-A-disaccharide synthase (390 aa).

It belongs to the LpxB family.

The catalysed reaction is a lipid X + a UDP-2-N,3-O-bis[(3R)-3-hydroxyacyl]-alpha-D-glucosamine = a lipid A disaccharide + UDP + H(+). The protein operates within bacterial outer membrane biogenesis; LPS lipid A biosynthesis. Condensation of UDP-2,3-diacylglucosamine and 2,3-diacylglucosamine-1-phosphate to form lipid A disaccharide, a precursor of lipid A, a phosphorylated glycolipid that anchors the lipopolysaccharide to the outer membrane of the cell. The protein is Lipid-A-disaccharide synthase of Haemophilus influenzae (strain PittEE).